A 404-amino-acid polypeptide reads, in one-letter code: 5-aminolevulinate synthase (404 aa).

Residues Arg-21 and Ser-136 each contribute to the substrate site. Ser-188, His-216, and Thr-244 together coordinate pyridoxal 5'-phosphate. Lys-247 is an active-site residue. Lys-247 carries the N6-(pyridoxal phosphate)lysine modification. The pyridoxal 5'-phosphate site is built by Thr-276 and Thr-277. A substrate-binding site is contributed by Thr-362.

Belongs to the class-II pyridoxal-phosphate-dependent aminotransferase family. Homodimer. It depends on pyridoxal 5'-phosphate as a cofactor.

It carries out the reaction succinyl-CoA + glycine + H(+) = 5-aminolevulinate + CO2 + CoA. The protein operates within porphyrin-containing compound metabolism; protoporphyrin-IX biosynthesis; 5-aminolevulinate from glycine: step 1/1. In Rhizobium meliloti (strain 1021) (Ensifer meliloti), this protein is 5-aminolevulinate synthase (hemA).